An 821-amino-acid chain; its full sequence is Leucine--tRNA ligase (821 aa).

The 'HIGH' region signature appears at 40-50; sequence PYPSGRIHMGH. Residues 586-590 carry the 'KMSKS' region motif; sequence KMSKS. Residue Lys-589 participates in ATP binding.

It belongs to the class-I aminoacyl-tRNA synthetase family.

Its subcellular location is the cytoplasm. It catalyses the reaction tRNA(Leu) + L-leucine + ATP = L-leucyl-tRNA(Leu) + AMP + diphosphate. The protein is Leucine--tRNA ligase of Aliarcobacter butzleri (strain RM4018) (Arcobacter butzleri).